Consider the following 361-residue polypeptide: Putative agmatine deiminase (361 aa).

The Amidino-cysteine intermediate role is filled by C354.

This sequence belongs to the agmatine deiminase family.

The enzyme catalyses agmatine + H2O = N-carbamoylputrescine + NH4(+). The polypeptide is Putative agmatine deiminase (Streptococcus pneumoniae (strain P1031)).